Consider the following 130-residue polypeptide: MKRRTARERAMQALYQMDITGELEPKVAVENTLDEGEETNEFLESLVVGFVENKEVIDEAIRQNLKKWKLERISIVDRSILRVAVYEMKYMEEIPHNVTINEAIEIAKTFGDEESRRFINGVLSNIKDTL.

This sequence belongs to the NusB family.

In terms of biological role, involved in transcription antitermination. Required for transcription of ribosomal RNA (rRNA) genes. Binds specifically to the boxA antiterminator sequence of the ribosomal RNA (rrn) operons. The chain is Transcription antitermination protein NusB from Bacillus anthracis (strain A0248).